Consider the following 228-residue polypeptide: Cytidylate kinase (228 aa).

17-25 (GPSASGKGT) is an ATP binding site.

It belongs to the cytidylate kinase family. Type 1 subfamily.

The protein resides in the cytoplasm. The catalysed reaction is CMP + ATP = CDP + ADP. The enzyme catalyses dCMP + ATP = dCDP + ADP. This Paraburkholderia xenovorans (strain LB400) protein is Cytidylate kinase.